Reading from the N-terminus, the 440-residue chain is Trigger factor (440 aa).

A PPIase FKBP-type domain is found at 163–248 (NDTVSINFKG…INSIKEKVLP (86 aa)).

The protein belongs to the FKBP-type PPIase family. Tig subfamily.

It is found in the cytoplasm. The catalysed reaction is [protein]-peptidylproline (omega=180) = [protein]-peptidylproline (omega=0). Involved in protein export. Acts as a chaperone by maintaining the newly synthesized protein in an open conformation. Functions as a peptidyl-prolyl cis-trans isomerase. In Finegoldia magna (strain ATCC 29328 / DSM 20472 / WAL 2508) (Peptostreptococcus magnus), this protein is Trigger factor.